Consider the following 780-residue polypeptide: LPS-assembly protein LptD (780 aa).

The N-terminal stretch at 1–24 is a signal peptide; the sequence is MKKRFPTLLATLIWTALYSQHTLA.

The protein belongs to the LptD family. Component of the lipopolysaccharide transport and assembly complex. Interacts with LptE and LptA.

The protein localises to the cell outer membrane. Together with LptE, is involved in the assembly of lipopolysaccharide (LPS) at the surface of the outer membrane. The polypeptide is LPS-assembly protein LptD (Yersinia pseudotuberculosis serotype I (strain IP32953)).